A 218-amino-acid chain; its full sequence is Octanoyltransferase (218 aa).

The 176-residue stretch at 34-209 (ETSRDELWIV…TFSQELGYQH (176 aa)) folds into the BPL/LPL catalytic domain. Residues 73 to 80 (RGGQVTYH), 140 to 142 (SLG), and 153 to 155 (GLA) each bind substrate. The Acyl-thioester intermediate role is filled by Cys-171.

The protein belongs to the LipB family.

The protein resides in the cytoplasm. The catalysed reaction is octanoyl-[ACP] + L-lysyl-[protein] = N(6)-octanoyl-L-lysyl-[protein] + holo-[ACP] + H(+). It participates in protein modification; protein lipoylation via endogenous pathway; protein N(6)-(lipoyl)lysine from octanoyl-[acyl-carrier-protein]: step 1/2. Functionally, catalyzes the transfer of endogenously produced octanoic acid from octanoyl-acyl-carrier-protein onto the lipoyl domains of lipoate-dependent enzymes. Lipoyl-ACP can also act as a substrate although octanoyl-ACP is likely to be the physiological substrate. The polypeptide is Octanoyltransferase (Shewanella loihica (strain ATCC BAA-1088 / PV-4)).